We begin with the raw amino-acid sequence, 136 residues long: Aspartate 1-decarboxylase (136 aa).

Serine 25 serves as the catalytic Schiff-base intermediate with substrate; via pyruvic acid. Position 25 is a pyruvic acid (Ser) (serine 25). Substrate is bound at residue threonine 57. The active-site Proton donor is tyrosine 58. Position 73-75 (73-75 (GAA)) interacts with substrate. Residues 117–136 (IFQLGEETTPEEAPSLEQRN) form a disordered region.

This sequence belongs to the PanD family. In terms of assembly, heterooctamer of four alpha and four beta subunits. It depends on pyruvate as a cofactor. Is synthesized initially as an inactive proenzyme, which is activated by self-cleavage at a specific serine bond to produce a beta-subunit with a hydroxyl group at its C-terminus and an alpha-subunit with a pyruvoyl group at its N-terminus.

The protein localises to the cytoplasm. It carries out the reaction L-aspartate + H(+) = beta-alanine + CO2. It functions in the pathway cofactor biosynthesis; (R)-pantothenate biosynthesis; beta-alanine from L-aspartate: step 1/1. In terms of biological role, catalyzes the pyruvoyl-dependent decarboxylation of aspartate to produce beta-alanine. The polypeptide is Aspartate 1-decarboxylase (Chloroherpeton thalassium (strain ATCC 35110 / GB-78)).